We begin with the raw amino-acid sequence, 62 residues long: Large ribosomal subunit protein bL28 (62 aa).

Positions 1 to 27 (MARECYITGRKARSGNKRSHAMNKSKR) are disordered. A compositionally biased stretch (basic residues) spans 10–27 (RKARSGNKRSHAMNKSKR).

The protein belongs to the bacterial ribosomal protein bL28 family.

The chain is Large ribosomal subunit protein bL28 from Shouchella clausii (strain KSM-K16) (Alkalihalobacillus clausii).